A 649-amino-acid polypeptide reads, in one-letter code: Endoglucanase D (649 aa).

The signal sequence occupies residues 1 to 41 (MSRMTLKSSMKKRVLSLLIAVVFLSLTGVFPSGLIETKVSA). The active-site Nucleophile is the Asp201. Active-site residues include His516 and Asp546. The active-site Proton donor is the Glu555. Residues 579-649 (NEVLYGDVND…LIRVIEKLPI (71 aa)) enclose the Dockerin domain.

It belongs to the glycosyl hydrolase 9 (cellulase E) family. The cofactor is Ca(2+).

It catalyses the reaction Endohydrolysis of (1-&gt;4)-beta-D-glucosidic linkages in cellulose, lichenin and cereal beta-D-glucans.. Functionally, this enzyme catalyzes the endohydrolysis of 1,4-beta-glucosidic linkages in cellulose, lichenin and cereal beta-D-glucans. This chain is Endoglucanase D (celD), found in Acetivibrio thermocellus (strain ATCC 27405 / DSM 1237 / JCM 9322 / NBRC 103400 / NCIMB 10682 / NRRL B-4536 / VPI 7372) (Clostridium thermocellum).